The chain runs to 550 residues: U-box domain-containing protein 40 (550 aa).

Basic and acidic residues predominate over residues 19 to 29 (KSDNLSRRESL). Residues 19 to 55 (KSDNLSRRESLAGKSKWRTSLSRSSSSSSSNNNSPTK) form a disordered region. Positions 38 to 52 (SLSRSSSSSSSNNNS) are enriched in low complexity. Positions 57 to 127 (EIPAEFLCPI…HSWCERRCFP (71 aa)) constitute a U-box domain. ARM repeat units follow at residues 260-299 (ESSR…NLSL), 301-340 (KSNK…SLAL), 342-381 (DENK…HLSL), 383-420 (QSNR…NMAS), and 422-464 (PVSR…GLSH).

It catalyses the reaction S-ubiquitinyl-[E2 ubiquitin-conjugating enzyme]-L-cysteine + [acceptor protein]-L-lysine = [E2 ubiquitin-conjugating enzyme]-L-cysteine + N(6)-ubiquitinyl-[acceptor protein]-L-lysine.. The protein operates within protein modification; protein ubiquitination. In terms of biological role, functions as an E3 ubiquitin ligase. The chain is U-box domain-containing protein 40 (PUB40) from Arabidopsis thaliana (Mouse-ear cress).